Here is a 354-residue protein sequence, read N- to C-terminus: Carbonic anhydrase 12 (354 aa).

Positions 1 to 24 (MPHRSLRATVVLLLVILKKQPSSS) are cleaved as a signal peptide. The Extracellular portion of the chain corresponds to 25 to 301 (APLNGSKWTY…QGLLTDTGLS (277 aa)). Residues N28, N42, N80, and N88 are each glycosylated (N-linked (GlcNAc...) asparagine). Positions 30–290 (SKWTYVGPAG…FDERLVYISF (261 aa)) constitute an Alpha-carbonic anhydrase domain. A disulfide bond links C50 and C231. The Proton donor/acceptor role is filled by H94. Residues H120, H122, and H146 each contribute to the Zn(2+) site. 227-228 (TT) lines the substrate pocket. The chain crosses the membrane as a helical span at residues 302-322 (LGIILSVALAGVLGISIVLAV). The Cytoplasmic segment spans residues 323–354 (SIWLFKRKKSKKGDNKGVIYKPAIKKEAEVHA).

The protein belongs to the alpha-carbonic anhydrase family. Homodimer. The cofactor is Zn(2+).

It localises to the membrane. The protein resides in the cell membrane. It carries out the reaction hydrogencarbonate + H(+) = CO2 + H2O. Its activity is regulated as follows. Inhibited by acetazolamide. Reversible hydration of carbon dioxide. The sequence is that of Carbonic anhydrase 12 from Mus musculus (Mouse).